A 215-amino-acid polypeptide reads, in one-letter code: Pyrrolidone-carboxylate peptidase (215 aa).

Catalysis depends on residues E80, C143, and H167.

It belongs to the peptidase C15 family. Homotetramer.

The protein resides in the cytoplasm. It carries out the reaction Release of an N-terminal pyroglutamyl group from a polypeptide, the second amino acid generally not being Pro.. In terms of biological role, removes 5-oxoproline from various penultimate amino acid residues except L-proline. The sequence is that of Pyrrolidone-carboxylate peptidase from Bacillus anthracis.